An 896-amino-acid polypeptide reads, in one-letter code: Translation initiation factor IF-2 (896 aa).

Disordered stretches follow at residues 32-99 and 117-304; these read LAQA…TALP and EITS…KQAE. Over residues 35–48 the composition is skewed to polar residues; it reads AGSSDTKNSPASKA. A compositionally biased stretch (basic and acidic residues) spans 153–169; that stretch reads TPERIEETPIIRTRTEP. Residues 203–214 are compositionally biased toward low complexity; the sequence is AASTEETTQQQP. The span at 215–227 shows a compositional bias: polar residues; the sequence is RQNDAASHNNKQQ. Residues 228 to 241 are compositionally biased toward low complexity; that stretch reads PSGTSSRPASSAPS. The segment covering 256–280 has biased composition (basic and acidic residues); that stretch reads RGSERDRSKRSDESVKAFTGRDRYG. The tr-type G domain maps to 401–570; it reads IRSPIVAFMG…ALQAEVLELK (170 aa). The G1 stretch occupies residues 410-417; that stretch reads GHVDHGKT. 410–417 provides a ligand contact to GTP; it reads GHVDHGKT. The G2 stretch occupies residues 435–439; the sequence is AITQH. The G3 stretch occupies residues 456–459; sequence DTPG. GTP-binding positions include 456–460 and 510–513; these read DTPGH and NKCD. Positions 510–513 are G4; it reads NKCD. A G5 region spans residues 546-548; sequence SAK.

This sequence belongs to the TRAFAC class translation factor GTPase superfamily. Classic translation factor GTPase family. IF-2 subfamily.

The protein localises to the cytoplasm. One of the essential components for the initiation of protein synthesis. Protects formylmethionyl-tRNA from spontaneous hydrolysis and promotes its binding to the 30S ribosomal subunits. Also involved in the hydrolysis of GTP during the formation of the 70S ribosomal complex. The polypeptide is Translation initiation factor IF-2 (Chlamydia trachomatis serovar L2 (strain ATCC VR-902B / DSM 19102 / 434/Bu)).